A 589-amino-acid chain; its full sequence is Chromodomain Y-like protein (589 aa).

Residues 1 to 10 (MGLGSSQPST) are compositionally biased toward polar residues. Residues 1-57 (MGLGSSQPSTKEAEPCTLQEKEEHPVDDTRQQNNAVPATVSDPDQVSPAVQDAETQV) are disordered. A compositionally biased stretch (basic and acidic residues) spans 11–30 (KEAEPCTLQEKEEHPVDDTR). Residues 55-115 (TQVESIVDKR…RHNERQKEGT (61 aa)) enclose the Chromo domain. An interaction with EZH2 region spans residues 55–300 (TQVESIVDKR…TIQTSVTGVT (246 aa)). Ser-82 carries the post-translational modification Phosphoserine. Residues 110 to 155 (RQKEGTLARANRASPSNARKQISRSTHSALSKTNPKALVVGKDHES) are disordered. Positions 117–128 (ARANRASPSNAR) are enriched in low complexity. Lys-129 carries the N6,N6,N6-trimethyllysine; by EHMT2; alternate modification. Lys-129 carries the N6,N6-dimethyllysine; by EHMT2; alternate modification. At Lys-129 the chain carries N6-methyllysine; by EHMT2; alternate. Residues 132-143 (SRSTHSALSKTN) are compositionally biased toward polar residues. Ser-164, Ser-195, and Ser-210 each carry phosphoserine. A disordered region spans residues 202 to 224 (SIDGFHGESPEKLDQGAEDTVTP). Residues 206 to 216 (FHGESPEKLDQ) show a composition bias toward basic and acidic residues. Residues 353 to 585 (SENNSLNPEV…DSMLKYLQRK (233 aa)) are acetyl-CoA-binding domain.

In terms of assembly, forms multimers and multimerization is required for stable binding to chromatin. Interacts with HDAC1 and HDAC2 via its C-terminal acetyl-CoA-binding domain. Interacts with EZH2, EED, SUZ12, REST, EHMT1 and EHMT2. Part of a complex containing at least CDYL, REST, WIZ, SETB1, EHMT1 and EHMT2. Part of a complex containing at least CDYL, MIER1, MIER2, HDAC1 and HDAC2. Interacts with CHAF1A and CHAF1B; bridging the CAF-1 complex to the MCM2-7 (MCM) complex. Interacts with MCM3 and MCM5; bridging the CAF-1 complex to the MCM2-7 (MCM) complex. Recruited to Xist RNA-coated X chromosome. Interacts with EHMT2 and PRDM9; interaction only takes place when PRDM9 is bound to hotspot DNA. In terms of tissue distribution, expressed in the brain, with expression in the hippocampal dentate gyrus, CA1, striatum and cortex (at protein level). Expressed in the prelimbic cortex.

The protein localises to the nucleus. The protein resides in the chromosome. The enzyme catalyses 3-hydroxybutanoyl-CoA = (2E)-butenoyl-CoA + H2O. In terms of biological role, chromatin reader protein that recognizes and binds histone H3 trimethylated at 'Lys-9', dimethylated at 'Lys-27' and trimethylated at 'Lys-27' (H3K9me3, H3K27me2 and H3K27me3, respectively). Part of multimeric repressive chromatin complexes, where it is required for transmission and restoration of repressive histone marks, thereby preserving the epigenetic landscape. Required for chromatin targeting and maximal enzymatic activity of Polycomb repressive complex 2 (PRC2); acts as a positive regulator of PRC2 activity by bridging the pre-existing histone H3K27me3 and newly recruited PRC2 on neighboring nucleosomes. Acts as a corepressor for REST by facilitating histone-lysine N-methyltransferase EHMT2 recruitment and H3K9 dimethylation at REST target genes for repression. Involved in X chromosome inactivation in females: recruited to Xist RNA-coated X chromosome and facilitates propagation of H3K9me2 by anchoring EHMT2. Promotes EZH2 accumulation and H3K27me3 methylation at DNA double strand breaks (DSBs), thereby facilitating transcriptional repression at sites of DNA damage and homology-directed repair of DSBs. Required for neuronal migration during brain development by repressing expression of RHOA. By repressing the expression of SCN8A, contributes to the inhibition of intrinsic neuronal excitability and epileptogenesis. In addition to acting as a chromatin reader, acts as a hydro-lyase. Shows crotonyl-coA hydratase activity by mediating the conversion of crotonyl-CoA ((2E)-butenoyl-CoA) to beta-hydroxybutyryl-CoA (3-hydroxybutanoyl-CoA), thereby acting as a negative regulator of histone crotonylation. Histone crotonylation is required during spermatogenesis; down-regulation of histone crotonylation by CDYL regulates the reactivation of sex chromosome-linked genes in round spermatids and histone replacement in elongating spermatids. By regulating histone crotonylation and trimethylation of H3K27, may be involved in stress-induced depression-like behaviors, possibly by regulating VGF expression. Displays acetyltransferase activity toward tubulin in vitro; such activity is however unsure in vivo and additional evidences would be required to confirm this result. Its function is as follows. Not able to recognize and bind histone H3K9me3, histone H3K27me2 and histone H3K27me3, due to the presence of a N-terminal extension that inactivates the chromo domain. The protein is Chromodomain Y-like protein of Rattus norvegicus (Rat).